Here is a 259-residue protein sequence, read N- to C-terminus: UPF0758 protein Bphyt_3148 (259 aa).

Positions 137–259 (LLNSPEAVEN…VYSFARAGWP (123 aa)) constitute an MPN domain. Residues His-208, His-210, and Asp-221 each contribute to the Zn(2+) site. Positions 208–221 (HNHPSGAVQPSASD) match the JAMM motif motif.

This sequence belongs to the UPF0758 family.

The polypeptide is UPF0758 protein Bphyt_3148 (Paraburkholderia phytofirmans (strain DSM 17436 / LMG 22146 / PsJN) (Burkholderia phytofirmans)).